An 83-amino-acid polypeptide reads, in one-letter code: Small ribosomal subunit protein uS17 (83 aa).

It belongs to the universal ribosomal protein uS17 family. Part of the 30S ribosomal subunit.

One of the primary rRNA binding proteins, it binds specifically to the 5'-end of 16S ribosomal RNA. The chain is Small ribosomal subunit protein uS17 from Magnetococcus marinus (strain ATCC BAA-1437 / JCM 17883 / MC-1).